A 297-amino-acid chain; its full sequence is Transcription factor MYB1R1 (297 aa).

A disordered region spans residues 44-96 (DLSQYEHPNANNNNNGGDNNESSKVAQDEGYASADDAVQHQSNSGRERKRGVP). Over residues 52–63 (NANNNNNGGDNN) the composition is skewed to low complexity. The 57-residue stretch at 89 to 145 (RERKRGVPWTEEEHKLFLLGLQKVGKGDWRGISRNFVKTRTPTQVASHAQKYFLRRS) folds into the HTH myb-type domain. Positions 117-141 (WRGISRNFVKTRTPTQVASHAQKYF) form a DNA-binding region, H-T-H motif.

It localises to the nucleus. The protein localises to the cytoplasm. Its subcellular location is the cytosol. Functionally, binds selectively to the DNA sequence 5'-[GA]GATAA-3' and may act as a transcription factor involved in the regulation of drought-responsive genes. Enhances stomatal closure in response to abscisic acid (ABA). Confers drought and salt tolerance. In Solanum tuberosum (Potato), this protein is Transcription factor MYB1R1.